A 915-amino-acid chain; its full sequence is Isoleucine--tRNA ligase (915 aa).

A 'HIGH' region motif is present at residues 57–67; the sequence is PYANGNLHMGH. Glutamate 554 contacts L-isoleucyl-5'-AMP. Positions 595–599 match the 'KMSKS' region motif; sequence KMSKS. Residue lysine 598 participates in ATP binding. Residues cysteine 885, cysteine 888, cysteine 905, and cysteine 908 each contribute to the Zn(2+) site.

This sequence belongs to the class-I aminoacyl-tRNA synthetase family. IleS type 1 subfamily. As to quaternary structure, monomer. The cofactor is Zn(2+).

It localises to the cytoplasm. The catalysed reaction is tRNA(Ile) + L-isoleucine + ATP = L-isoleucyl-tRNA(Ile) + AMP + diphosphate. In terms of biological role, catalyzes the attachment of isoleucine to tRNA(Ile). As IleRS can inadvertently accommodate and process structurally similar amino acids such as valine, to avoid such errors it has two additional distinct tRNA(Ile)-dependent editing activities. One activity is designated as 'pretransfer' editing and involves the hydrolysis of activated Val-AMP. The other activity is designated 'posttransfer' editing and involves deacylation of mischarged Val-tRNA(Ile). The protein is Isoleucine--tRNA ligase of Staphylococcus carnosus (strain TM300).